Reading from the N-terminus, the 363-residue chain is Phosphoserine aminotransferase (363 aa).

Arginine 42 lines the L-glutamate pocket. Residues 76–77 (AS), tryptophan 101, threonine 151, aspartate 170, and glutamine 193 each bind pyridoxal 5'-phosphate. The residue at position 194 (lysine 194) is an N6-(pyridoxal phosphate)lysine. Residue 234-235 (NT) coordinates pyridoxal 5'-phosphate.

It belongs to the class-V pyridoxal-phosphate-dependent aminotransferase family. SerC subfamily. As to quaternary structure, homodimer. It depends on pyridoxal 5'-phosphate as a cofactor.

It localises to the cytoplasm. The enzyme catalyses O-phospho-L-serine + 2-oxoglutarate = 3-phosphooxypyruvate + L-glutamate. It carries out the reaction 4-(phosphooxy)-L-threonine + 2-oxoglutarate = (R)-3-hydroxy-2-oxo-4-phosphooxybutanoate + L-glutamate. The protein operates within amino-acid biosynthesis; L-serine biosynthesis; L-serine from 3-phospho-D-glycerate: step 2/3. Its function is as follows. Catalyzes the reversible conversion of 3-phosphohydroxypyruvate to phosphoserine and of 3-hydroxy-2-oxo-4-phosphonooxybutanoate to phosphohydroxythreonine. The protein is Phosphoserine aminotransferase of Listeria innocua serovar 6a (strain ATCC BAA-680 / CLIP 11262).